We begin with the raw amino-acid sequence, 798 residues long: Metabotropic glutamate receptor-like protein A (798 aa).

A signal peptide spans 1–23 (MNKLKFLIILFITFLFNLKYINS). The Extracellular segment spans residues 24-388 (LKQCKISVLL…DYSNSMKLGL (365 aa)). 3 N-linked (GlcNAc...) asparagine glycosylation sites follow: N186, N275, and N320. The chain crosses the membrane as a helical span at residues 389–409 (TIVSGFCILFCIISMVLVIMF). The Cytoplasmic segment spans residues 410–419 (RHAKIIKSAS). A helical membrane pass occupies residues 420–440 (PIFCLLILFGCIIIFSGCIIF). The Extracellular segment spans residues 441 to 447 (SLSPTDG). The helical transmembrane segment at 448–468 (ICGARVWLLSIGYTIFLGSLL) threads the bilayer. Topologically, residues 469 to 494 (VKNWRIWLLFDNPKLKKRSITNWKLY) are cytoplasmic. Residues 495–515 (PFVAGILAADVLILALWQGLG) traverse the membrane as a helical segment. Residues 516-545 (DIRSESRIGIDSLTKYQYANVCSSNDQGSV) lie on the Extracellular side of the membrane. Residues 546-566 (ALYILLVFHGIKLLAACFISF) form a helical membrane-spanning segment. The Cytoplasmic portion of the chain corresponds to 567-580 (KIKAVDIEEFNESK). The chain crosses the membrane as a helical span at residues 581–601 (PIASSIYIITFCLFIVIPLMV). Over 602 to 609 (SPQSVASQ) the chain is Extracellular. Residues 610 to 630 (VITIVVCAIVTTLISISLLFG) traverse the membrane as a helical segment. Over 631-798 (SKFYMMATQG…NQSEIDPDDV (168 aa)) the chain is Cytoplasmic. A coiled-coil region spans residues 714–771 (AEQDSKLDLENQNDENEIENNQNNQNNIVEDCQKVEKLEKDENLEKDENLEKDENLEK). Residues 752-774 (EKDENLEKDENLEKDENLEKDNE) are compositionally biased toward basic and acidic residues. Residues 752 to 798 (EKDENLEKDENLEKDENLEKDNENQSIIQKKRLSKNFNQSEIDPDDV) form a disordered region.

In the N-terminal section; belongs to the BMP lipoprotein family. The protein in the C-terminal section; belongs to the G-protein coupled receptor 3 family. GABA-B receptor subfamily.

Its subcellular location is the membrane. The protein localises to the cytoplasm. It localises to the cell cortex. The protein resides in the perinuclear region. In terms of biological role, may play an important role in the terminal differentiation. This Dictyostelium discoideum (Social amoeba) protein is Metabotropic glutamate receptor-like protein A (grlA).